Here is a 342-residue protein sequence, read N- to C-terminus: Anthranilate phosphoribosyltransferase (342 aa).

5-phospho-alpha-D-ribose 1-diphosphate-binding positions include glycine 84, 87-88, threonine 92, 94-97, 112-120, and serine 124; these read GD, NITT, and KHGNRSVSS. Glycine 84 is a binding site for anthranilate. Threonine 96 provides a ligand contact to Mg(2+). Asparagine 115 lines the anthranilate pocket. Position 170 (arginine 170) interacts with anthranilate. Residues aspartate 228 and glutamate 229 each contribute to the Mg(2+) site.

It belongs to the anthranilate phosphoribosyltransferase family. In terms of assembly, homodimer. Mg(2+) is required as a cofactor.

It catalyses the reaction N-(5-phospho-beta-D-ribosyl)anthranilate + diphosphate = 5-phospho-alpha-D-ribose 1-diphosphate + anthranilate. The protein operates within amino-acid biosynthesis; L-tryptophan biosynthesis; L-tryptophan from chorismate: step 2/5. Its function is as follows. Catalyzes the transfer of the phosphoribosyl group of 5-phosphorylribose-1-pyrophosphate (PRPP) to anthranilate to yield N-(5'-phosphoribosyl)-anthranilate (PRA). The polypeptide is Anthranilate phosphoribosyltransferase (Corynebacterium efficiens (strain DSM 44549 / YS-314 / AJ 12310 / JCM 11189 / NBRC 100395)).